We begin with the raw amino-acid sequence, 82 residues long: Acyl carrier protein (82 aa).

The Carrier domain occupies 3–81; the sequence is SSEQEILAGL…DAVTYIAGAQ (79 aa). The residue at position 41 (Ser41) is an O-(pantetheine 4'-phosphoryl)serine.

The protein belongs to the acyl carrier protein (ACP) family. 4'-phosphopantetheine is transferred from CoA to a specific serine of apo-ACP by AcpS. This modification is essential for activity because fatty acids are bound in thioester linkage to the sulfhydryl of the prosthetic group.

It is found in the cytoplasm. Its pathway is lipid metabolism; fatty acid biosynthesis. Carrier of the growing fatty acid chain in fatty acid biosynthesis. The protein is Acyl carrier protein of Beutenbergia cavernae (strain ATCC BAA-8 / DSM 12333 / CCUG 43141 / JCM 11478 / NBRC 16432 / NCIMB 13614 / HKI 0122).